Here is a 343-residue protein sequence, read N- to C-terminus: Holliday junction branch migration complex subunit RuvB (343 aa).

A disordered region spans residues 1–20; sequence MEEMASRMISGDPELGEPFQ. Residues 1-185 form a large ATPase domain (RuvB-L) region; it reads MEEMASRMIS…FGILARMQFY (185 aa). ATP-binding positions include Leu-24, Arg-25, Gly-66, Lys-69, Thr-70, Thr-71, 132–134, Arg-175, Tyr-185, and Arg-222; that span reads EDF. Thr-70 lines the Mg(2+) pocket. A small ATPAse domain (RuvB-S) region spans residues 186 to 256; that stretch reads EPDELQQIVT…LADRALLALE (71 aa). Positions 259-343 are head domain (RuvB-H); the sequence is RNGLDNMDHR…PRPVQQGTLL (85 aa). Positions 295, 314, and 319 each coordinate DNA.

This sequence belongs to the RuvB family. As to quaternary structure, homohexamer. Forms an RuvA(8)-RuvB(12)-Holliday junction (HJ) complex. HJ DNA is sandwiched between 2 RuvA tetramers; dsDNA enters through RuvA and exits via RuvB. An RuvB hexamer assembles on each DNA strand where it exits the tetramer. Each RuvB hexamer is contacted by two RuvA subunits (via domain III) on 2 adjacent RuvB subunits; this complex drives branch migration. In the full resolvosome a probable DNA-RuvA(4)-RuvB(12)-RuvC(2) complex forms which resolves the HJ.

Its subcellular location is the cytoplasm. The enzyme catalyses ATP + H2O = ADP + phosphate + H(+). Functionally, the RuvA-RuvB-RuvC complex processes Holliday junction (HJ) DNA during genetic recombination and DNA repair, while the RuvA-RuvB complex plays an important role in the rescue of blocked DNA replication forks via replication fork reversal (RFR). RuvA specifically binds to HJ cruciform DNA, conferring on it an open structure. The RuvB hexamer acts as an ATP-dependent pump, pulling dsDNA into and through the RuvAB complex. RuvB forms 2 homohexamers on either side of HJ DNA bound by 1 or 2 RuvA tetramers; 4 subunits per hexamer contact DNA at a time. Coordinated motions by a converter formed by DNA-disengaged RuvB subunits stimulates ATP hydrolysis and nucleotide exchange. Immobilization of the converter enables RuvB to convert the ATP-contained energy into a lever motion, pulling 2 nucleotides of DNA out of the RuvA tetramer per ATP hydrolyzed, thus driving DNA branch migration. The RuvB motors rotate together with the DNA substrate, which together with the progressing nucleotide cycle form the mechanistic basis for DNA recombination by continuous HJ branch migration. Branch migration allows RuvC to scan DNA until it finds its consensus sequence, where it cleaves and resolves cruciform DNA. The sequence is that of Holliday junction branch migration complex subunit RuvB from Magnetococcus marinus (strain ATCC BAA-1437 / JCM 17883 / MC-1).